A 400-amino-acid polypeptide reads, in one-letter code: ELAV-like protein 4 (400 aa).

A disordered region spans residues 12-48 (TMEPQVSNGPTSNTSNGPSSNSRNCPSPMQTGAATDD). Positions 18–33 (SNGPTSNTSNGPSSNS) are enriched in low complexity. A compositionally biased stretch (polar residues) spans 34–44 (RNCPSPMQTGA). 3 RRM domains span residues 51-158 (TNLI…YARP), 166-246 (ANLY…FANN), and 317-395 (WCIF…FKTN).

This sequence belongs to the RRM elav family.

The protein localises to the cytoplasm. Its subcellular location is the perikaryon. It is found in the cell projection. The protein resides in the axon. It localises to the dendrite. The protein localises to the growth cone. In terms of biological role, RNA-binding protein that is involved in the post-transcriptional regulation of mRNAs. Plays a role in the regulation of mRNA stability, alternative splicing and translation. Binds to AU-rich element (ARE) sequences in the 3' untranslated region (3'UTR) of target mRNAs. Mainly plays a role in neuron-specific RNA processing. This chain is ELAV-like protein 4 (elavl4), found in Xenopus tropicalis (Western clawed frog).